Here is a 388-residue protein sequence, read N- to C-terminus: Arrestin-C (388 aa).

Belongs to the arrestin family. Homodimer; disulfide-linked in response to retinal illumination. Interacts with CXCR4; the interaction is dependent on the C-terminal phosphorylation of CXCR4 and modulates the calcium ion mobilization activity of CXCR4. Interacts with GPR84. In terms of tissue distribution, inner and outer segments, and the inner plexiform regions of the retina.

Its subcellular location is the photoreceptor inner segment. The protein localises to the cell projection. It is found in the cilium. The protein resides in the photoreceptor outer segment. In terms of biological role, may play a role in an as yet undefined retina-specific signal transduction. Could bind to photoactivated-phosphorylated red/green opsins. The sequence is that of Arrestin-C (ARR3) from Homo sapiens (Human).